We begin with the raw amino-acid sequence, 302 residues long: ARVVLGCWSVLSQAAQTDDEERAGNRRPIWIMGHMVNAIGQIDEFVNLGANSIETDVSFDDNANPEYTYHGIPCDCGRNCKKYENFNDFLKGLRSATTPGNSKYQEKLVLVVFDLKTGSLYDNQANDAGKKLAKNLLQHYWNNGNNGGRAYIVLSIPDLNHYPLIKGFKDQLTKDGHPELMDKVGHDFSGNDDIGDVGKAYKKAGITGHIWQSDGITNCLPRGLSRVNAAVANRDSANGFINKVYYWTVDKRSTTRDALDAGVDGIMTNYPDVITDVLNEAAYKKKFRVATYDDNPWVTFKK.

A signal peptide spans 1–14 (ARVVLGCWSVLSQA). Positions 15-22 (AQTDDEER) are excised as a propeptide. Residue H34 is part of the active site. Mg(2+) is bound by residues E54 and D56. H70 functions as the Nucleophile in the catalytic mechanism. 2 cysteine pairs are disulfide-bonded: C74–C80 and C76–C219. Residue D114 participates in Mg(2+) binding.

Belongs to the arthropod phospholipase D family. Class II subfamily. Class IIa sub-subfamily. Requires Mg(2+) as cofactor. In terms of tissue distribution, expressed by the venom gland.

Its subcellular location is the secreted. The enzyme catalyses an N-(acyl)-sphingosylphosphocholine = an N-(acyl)-sphingosyl-1,3-cyclic phosphate + choline. It carries out the reaction an N-(acyl)-sphingosylphosphoethanolamine = an N-(acyl)-sphingosyl-1,3-cyclic phosphate + ethanolamine. The catalysed reaction is a 1-acyl-sn-glycero-3-phosphocholine = a 1-acyl-sn-glycero-2,3-cyclic phosphate + choline. It catalyses the reaction a 1-acyl-sn-glycero-3-phosphoethanolamine = a 1-acyl-sn-glycero-2,3-cyclic phosphate + ethanolamine. Dermonecrotic toxins cleave the phosphodiester linkage between the phosphate and headgroup of certain phospholipids (sphingolipid and lysolipid substrates), forming an alcohol (often choline) and a cyclic phosphate. This toxin acts on sphingomyelin (SM). It may also act on ceramide phosphoethanolamine (CPE), lysophosphatidylcholine (LPC) and lysophosphatidylethanolamine (LPE), but not on lysophosphatidylserine (LPS), and lysophosphatidylglycerol (LPG). It acts by transphosphatidylation, releasing exclusively cyclic phosphate products as second products. Induces hemolysis, dermonecrosis, vascular permeability and platelet aggregation. In Loxosceles intermedia (Brown spider), this protein is Dermonecrotic toxin LiSicTox-alphaIA1bii.